Reading from the N-terminus, the 93-residue chain is Small ribosomal subunit protein uS19c (93 aa).

This sequence belongs to the universal ribosomal protein uS19 family.

It localises to the plastid. The protein localises to the chloroplast. Its function is as follows. Protein S19 forms a complex with S13 that binds strongly to the 16S ribosomal RNA. This Brachypodium distachyon (Purple false brome) protein is Small ribosomal subunit protein uS19c.